A 151-amino-acid chain; its full sequence is Deoxyuridine 5'-triphosphate nucleotidohydrolase (151 aa).

Residues 70–72 (RSG), asparagine 83, 87–89 (LID), and methionine 97 contribute to the substrate site.

This sequence belongs to the dUTPase family. It depends on Mg(2+) as a cofactor.

It catalyses the reaction dUTP + H2O = dUMP + diphosphate + H(+). It functions in the pathway pyrimidine metabolism; dUMP biosynthesis; dUMP from dCTP (dUTP route): step 2/2. Its function is as follows. This enzyme is involved in nucleotide metabolism: it produces dUMP, the immediate precursor of thymidine nucleotides and it decreases the intracellular concentration of dUTP so that uracil cannot be incorporated into DNA. This is Deoxyuridine 5'-triphosphate nucleotidohydrolase from Pseudomonas fluorescens (strain Pf0-1).